The primary structure comprises 186 residues: UPF0461 protein C5orf24 homolog (186 aa).

The span at Asn60–Ser69 shows a compositional bias: polar residues. Positions Asn60–Arg140 are disordered. Residues Leu78–Arg92 are compositionally biased toward basic residues. Positions Ser94–Gly107 are enriched in polar residues.

It belongs to the UPF0461 family.

In Xenopus tropicalis (Western clawed frog), this protein is UPF0461 protein C5orf24 homolog.